A 223-amino-acid chain; its full sequence is Protein phosphatase 1 regulatory subunit 3C (223 aa).

A CBM21 domain is found at 104-209 (REQLTRKLVC…NNDGKNYSLH (106 aa)).

Interacts with PPP1CC catalytic subunit of PP1 and associates with glycogen. Forms complexes with glycogen phosphorylase, glycogen synthase and phosphorylase kinase which is necessary for its regulation of PP1 activity.

Functionally, acts as a glycogen-targeting subunit for PP1 and regulates its activity. Activates glycogen synthase, reduces glycogen phosphorylase activity and limits glycogen breakdown. The sequence is that of Protein phosphatase 1 regulatory subunit 3C from Xenopus tropicalis (Western clawed frog).